The following is a 130-amino-acid chain: Small ribosomal subunit protein uS11c (130 aa).

The protein belongs to the universal ribosomal protein uS11 family. Part of the 30S ribosomal subunit.

It localises to the plastid. The protein resides in the chloroplast. The chain is Small ribosomal subunit protein uS11c from Physcomitrium patens (Spreading-leaved earth moss).